The chain runs to 601 residues: Kelch-like ECH-associated protein 1A (601 aa).

In terms of domain architecture, BTB spans 44 to 117 (MDELRHHEML…VISRLIDFAY (74 aa)). The 101-residue stretch at 153–253 (KNLEPSNVIG…LNAVHIYALP (101 aa)) folds into the BACK domain. Kelch repeat units lie at residues 292-337 (PTPH…PCSG), 338-388 (LGAC…PRNR), 389-435 (VGVG…ARLG), 436-482 (AGVA…VRSG), 484-529 (GVVC…CRSA), and 530-576 (HGVS…GRSG).

This sequence belongs to the KEAP1 family. In terms of assembly, homodimer and heterodimer; heterodimerizes with keap1b. Component of the BCR(KEAP1) E3 ubiquitin ligase complex, at least composed of 2 molecules of cul3, 2 molecules of keap1 (keap1a and/or keap1b), and rbx1. Interacts with nfe2l2/nrf2; the interaction is direct. Non-enzymatic covalent modifications of reactive cysteines by electrophile metabolites inactivate the BCR(KEAP1) complex. In terms of tissue distribution, widely expressed.

It localises to the cytoplasm. Its subcellular location is the nucleus. The protein operates within protein modification; protein ubiquitination. Its activity is regulated as follows. Ubiquitin ligase activity of the BCR(KEAP1) complex is inhibited by oxidative stress and electrophile metabolites such as sulforaphane. Electrophile metabolites react with reactive cysteine residues in keap1 and trigger non-enzymatic covalent modifications of these cysteine residues, leading to inactivate the ubiquitin ligase activity of the BCR(KEAP1) complex. Substrate-specific adapter of a BCR (BTB-CUL3-RBX1) E3 ubiquitin ligase complex that regulates the response to oxidative stress by targeting nfe2l2/nrf2 for ubiquitination. Keap1 acts as a key sensor of oxidative and electrophilic stress: in normal conditions, the BCR(KEAP1) complex mediates ubiquitination and degradation of nfe2l2/nrf2, a transcription factor regulating expression of many cytoprotective genes. In response to oxidative stress, different electrophile metabolites trigger non-enzymatic covalent modifications of highly reactive cysteine residues in KEAP1, leading to inactivate the ubiquitin ligase activity of the BCR(KEAP1) complex, promoting nfe2l2/nrf2 nuclear accumulation and expression of phase II detoxifying enzymes. This Danio rerio (Zebrafish) protein is Kelch-like ECH-associated protein 1A.